A 348-amino-acid polypeptide reads, in one-letter code: Phosphoribosylformylglycinamidine cyclo-ligase (348 aa).

It belongs to the AIR synthase family.

It is found in the cytoplasm. It carries out the reaction 2-formamido-N(1)-(5-O-phospho-beta-D-ribosyl)acetamidine + ATP = 5-amino-1-(5-phospho-beta-D-ribosyl)imidazole + ADP + phosphate + H(+). It functions in the pathway purine metabolism; IMP biosynthesis via de novo pathway; 5-amino-1-(5-phospho-D-ribosyl)imidazole from N(2)-formyl-N(1)-(5-phospho-D-ribosyl)glycinamide: step 2/2. This Geobacter sp. (strain M21) protein is Phosphoribosylformylglycinamidine cyclo-ligase.